The chain runs to 259 residues: MNVKDETFWSVHNLCVNYEHAAVLYHISFSLGKGSLTAILGPNGAGKSTLLKASLGLIKPSSGTVYFFNQKFKKVRQRIAYMPQRASVDWDFPMTVLDLALMGCYSYKGMWGRISSDDRREAFHILERVGLESVADRQIGQLSGGQQQRAFLARALMQKADLYLMDELFSAIDMASFKTSVGVLQELRDQGKTIVVVHHDLSHVRQLFDHVVLLNKRLICCGPTDECLNGDTIFQTYGCEIELLEQTLKLSRGKQFGSC.

The 239-residue stretch at 3–241 (VKDETFWSVH…TIFQTYGCEI (239 aa)) folds into the ABC transporter domain. 41–48 (GPNGAGKS) is a binding site for ATP.

The protein belongs to the ABC transporter superfamily.

Its subcellular location is the cell inner membrane. Part of an ATP-driven transport system CPn0346/CPn0347/CPn0348/CPn0349 for a metal. Probably responsible for energy coupling to the transport system. The polypeptide is Probable metal transport system ATP-binding protein CPn_0348/CP_0412/CPj0348/CpB0355 (Chlamydia pneumoniae (Chlamydophila pneumoniae)).